The sequence spans 415 residues: DNA polymerase IV (415 aa).

Residues 15-196 (ILHVDMNCFF…LSVEAMHGIG (182 aa)) enclose the UmuC domain. 2 residues coordinate Mg(2+): Asp19 and Asp115. The active site involves Glu116. Over residues 235–246 (KRAKGTDDREVD) the composition is skewed to basic and acidic residues. The tract at residues 235–260 (KRAKGTDDREVDPSQMGQHKSVGNSM) is disordered. Residues 249–260 (QMGQHKSVGNSM) show a composition bias toward polar residues.

The protein belongs to the DNA polymerase type-Y family. In terms of assembly, monomer. Mg(2+) serves as cofactor.

It localises to the cytoplasm. The catalysed reaction is DNA(n) + a 2'-deoxyribonucleoside 5'-triphosphate = DNA(n+1) + diphosphate. In terms of biological role, poorly processive, error-prone DNA polymerase involved in untargeted mutagenesis. Copies undamaged DNA at stalled replication forks, which arise in vivo from mismatched or misaligned primer ends. These misaligned primers can be extended by PolIV. Exhibits no 3'-5' exonuclease (proofreading) activity. May be involved in translesional synthesis, in conjunction with the beta clamp from PolIII. This Bacillus cereus (strain ATCC 14579 / DSM 31 / CCUG 7414 / JCM 2152 / NBRC 15305 / NCIMB 9373 / NCTC 2599 / NRRL B-3711) protein is DNA polymerase IV.